Consider the following 246-residue polypeptide: Major prion protein (246 aa).

Residues 1–15 form the signal peptide; that stretch reads MLVVFVATWSDLGLC. Residues 16–223 form an interaction with GRB2, ERI3 and SYN1 region; the sequence is KKRPKPGGWN…ESQAYYQRGS (208 aa). The disordered stretch occupies residues 18-100; sequence RPKPGGWNTG…QWHKPSKPKT (83 aa). Tandem repeats lie at residues 44 to 52, 53 to 60, 61 to 68, 69 to 76, and 77 to 84. The 5 X 8 AA tandem repeats of P-H-G-G-G-W-G-Q stretch occupies residues 44–84; that stretch reads PQGGGGWGQPHGGGWGQPHGGGWGQPHGGGWGQPHGGGWGQ. The span at 45-88 shows a compositional bias: gly residues; the sequence is QGGGGWGQPHGGGWGQPHGGGWGQPHGGGWGQPHGGGWGQGGGT. The Cu(2+) site is built by H54, G55, G56, H62, G63, G64, H70, G71, G72, H78, G79, and G80. The segment covering 91–100 has biased composition (basic residues); the sequence is QWHKPSKPKT. C172 and C207 are oxidised to a cystine. 2 N-linked (GlcNAc...) asparagine glycosylation sites follow: N174 and N190. S223 carries the GPI-anchor amidated serine lipid modification. A propeptide spans 224–246 (removed in mature form); sequence SMVLFSSPPVILLISFLIFLIVG.

Belongs to the prion family. Monomer and homodimer. Has a tendency to aggregate into amyloid fibrils containing a cross-beta spine, formed by a steric zipper of superposed beta-strands. Soluble oligomers may represent an intermediate stage on the path to fibril formation. Copper binding may promote oligomerization. Interacts with GRB2, APP, ERI3/PRNPIP and SYN1. Mislocalized cytosolically exposed PrP interacts with MGRN1; this interaction alters MGRN1 subcellular location and causes lysosomal enlargement. Interacts with KIAA1191.

It localises to the cell membrane. It is found in the golgi apparatus. Its primary physiological function is unclear. Has cytoprotective activity against internal or environmental stresses. May play a role in neuronal development and synaptic plasticity. May be required for neuronal myelin sheath maintenance. May play a role in iron uptake and iron homeostasis. Soluble oligomers are toxic to cultured neuroblastoma cells and induce apoptosis (in vitro). Association with GPC1 (via its heparan sulfate chains) targets PRNP to lipid rafts. Also provides Cu(2+) or Zn(2+) for the ascorbate-mediated GPC1 deaminase degradation of its heparan sulfate side chains. This is Major prion protein (PRNP) from Erythrocebus patas (Red guenon).